Here is a 452-residue protein sequence, read N- to C-terminus: GPI mannosyltransferase 2 (452 aa).

Topologically, residues 1–7 are cytoplasmic; that stretch reads MMEKVTK. The helical transmembrane segment at 8–28 threads the bilayer; it reads LALTSRVMVLVVQLLANFATP. The Lumenal portion of the chain corresponds to 29-113; that stretch reads DHKPDVFRMP…HLGIPLSRDA (85 aa). The helical transmembrane segment at 114 to 134 threads the bilayer; sequence LILLVAVALNVLIFCKTANVL. Residues 135–161 are Cytoplasmic-facing; it reads YKLTQRMFNDHNKSWNAALIFCFNPAS. A helical transmembrane segment spans residues 162-182; the sequence is IFFSAAYSETFFAFASFSLML. Residues 183-209 lie on the Lumenal side of the membrane; the sequence is ECMRSEKDFRTFRLGAALTGCFVCRSN. The helical transmembrane segment at 210 to 230 threads the bilayer; the sequence is GLLTLGFPLYFLARHILLSTG. Over 231–238 the chain is Cytoplasmic; that stretch reads SVQRCWQL. Residues 239–259 traverse the membrane as a helical segment; it reads FKMGLAMLVALGILHTYYFYI. The Lumenal segment spans residues 260–284; that stretch reads YRLYCLPDVKVQHAQHVVDYAKERS. Residues 285-305 form a helical membrane-spanning segment; sequence FLISGQASVGSPWCGYTLPFP. At 306–327 the chain is on the cytoplasmic side; sequence YTYVQSHYWDVGFLRYYKWKQL. A helical membrane pass occupies residues 328 to 348; it reads PNFLLALPMLLFMHWHCYDYI. The Lumenal segment spans residues 349–370; that stretch reads RKLVANTWSKISPSEYQGILKE. Residues 371 to 391 traverse the membrane as a helical segment; the sequence is HISFPFVLHAAVLTLVCTLYV. Over 392 to 398 the chain is Cytoplasmic; sequence HIQVSTR. Residues 399–419 traverse the membrane as a helical segment; sequence LLASATPVFYWFAADYMPNTF. At 420 to 426 the chain is on the lumenal side; that stretch reads QLSFRSK. The helical transmembrane segment at 427–447 threads the bilayer; sequence AGVLFIWCLTYSLVGTVLFSN. At 448-452 the chain is on the cytoplasmic side; that stretch reads NYPWT.

The protein belongs to the PIGV family.

The protein resides in the endoplasmic reticulum membrane. It participates in glycolipid biosynthesis; glycosylphosphatidylinositol-anchor biosynthesis. Mannosyltransferase involved in glycosylphosphatidylinositol-anchor biosynthesis. Transfers the second mannose to the glycosylphosphatidylinositol during GPI precursor assembly. Required for the GPI-mediated endoplasmic reticulum exit and proper targeting to the cell surface of chp. Required for GPI-mediated membrane attachment of chp, qsm and Cont. Essential for microvillar stability in the rhabdomere. This Drosophila pseudoobscura pseudoobscura (Fruit fly) protein is GPI mannosyltransferase 2.